Consider the following 307-residue polypeptide: Oxygen-dependent coproporphyrinogen-III oxidase (307 aa).

Ser99 provides a ligand contact to substrate. A divalent metal cation contacts are provided by His103 and His113. The Proton donor role is filled by His113. Asn115–Arg117 is a substrate binding site. His152 and His182 together coordinate a divalent metal cation. The important for dimerization stretch occupies residues Tyr247–Arg282. Gly265–Arg267 lines the substrate pocket.

The protein belongs to the aerobic coproporphyrinogen-III oxidase family. Homodimer. It depends on a divalent metal cation as a cofactor.

Its subcellular location is the cytoplasm. The enzyme catalyses coproporphyrinogen III + O2 + 2 H(+) = protoporphyrinogen IX + 2 CO2 + 2 H2O. It participates in porphyrin-containing compound metabolism; protoporphyrin-IX biosynthesis; protoporphyrinogen-IX from coproporphyrinogen-III (O2 route): step 1/1. In terms of biological role, involved in the heme biosynthesis. Catalyzes the aerobic oxidative decarboxylation of propionate groups of rings A and B of coproporphyrinogen-III to yield the vinyl groups in protoporphyrinogen-IX. The chain is Oxygen-dependent coproporphyrinogen-III oxidase from Burkholderia cenocepacia (strain ATCC BAA-245 / DSM 16553 / LMG 16656 / NCTC 13227 / J2315 / CF5610) (Burkholderia cepacia (strain J2315)).